Here is a 147-residue protein sequence, read N- to C-terminus: Lysozyme C (147 aa).

An N-terminal signal peptide occupies residues 1-17 (MRSLLILVLCFLPLAAP). Positions 19–147 (KVYGRCELAA…VNVWIRGCRL (129 aa)) constitute a C-type lysozyme domain. 4 disulfides stabilise this stretch: cysteine 24–cysteine 145, cysteine 48–cysteine 133, cysteine 82–cysteine 98, and cysteine 94–cysteine 112. Residues glutamate 53 and aspartate 70 contribute to the active site.

It belongs to the glycosyl hydrolase 22 family. As to quaternary structure, monomer. Post-translationally, by an evolutionary shift in the site of proteolytic cleavage of prelysozyme, Gly-18 became the N-terminal residue of the mature protein instead of being the C-terminal residue of the signal sequence as in other birds.

The protein resides in the secreted. The enzyme catalyses Hydrolysis of (1-&gt;4)-beta-linkages between N-acetylmuramic acid and N-acetyl-D-glucosamine residues in a peptidoglycan and between N-acetyl-D-glucosamine residues in chitodextrins.. In terms of biological role, lysozymes have primarily a bacteriolytic function; those in tissues and body fluids are associated with the monocyte-macrophage system and enhance the activity of immunoagents. The protein is Lysozyme C (LYZ) of Phasianus colchicus colchicus (Black-necked pheasant).